A 122-amino-acid polypeptide reads, in one-letter code: E3 ubiquitin-protein ligase PPP1R11 (122 aa).

The segment covering 1-12 (MAEVPGTSSETI) has biased composition (polar residues). The segment at 1-33 (MAEVPGTSSETITETVQTGTPPPPQQEGRSLTI) is disordered. Phosphothreonine is present on threonine 20. Residues 55 to 65 (HLGRRSSKCCC) form an atypical RING finger domain 1 region. Residues 72-122 (QFGESSSESEGDDEEGCGSAHCILGHGRRGHGQREGGGTTVPPSSGGTNPH) are disordered. Residues 78-87 (SESEGDDEEG) show a composition bias toward acidic residues. An atypical RING finger domain 2 region spans residues 88–97 (CGSAHCILGH). The segment covering 111-122 (TVPPSSGGTNPH) has biased composition (low complexity).

The enzyme catalyses S-ubiquitinyl-[E2 ubiquitin-conjugating enzyme]-L-cysteine + [acceptor protein]-L-lysine = [E2 ubiquitin-conjugating enzyme]-L-cysteine + N(6)-ubiquitinyl-[acceptor protein]-L-lysine.. Its pathway is protein modification; protein ubiquitination. Functionally, atypical E3 ubiquitin-protein ligase which ubiquitinates TLR2 at 'Lys-754' leading to its degradation by the proteasome. Inhibitor of protein phosphatase 1. This Danio rerio (Zebrafish) protein is E3 ubiquitin-protein ligase PPP1R11 (ppp1r11).